We begin with the raw amino-acid sequence, 324 residues long: Protein GET4 (324 aa).

The protein belongs to the GET4 family. In terms of assembly, interacts with GET3A.

It localises to the cytoplasm. The protein resides in the cytosol. Functionally, involved in the regulation of root hair growth. This chain is Protein GET4, found in Arabidopsis thaliana (Mouse-ear cress).